Reading from the N-terminus, the 269-residue chain is Putative pyruvate, phosphate dikinase regulatory protein (269 aa).

Position 151 to 158 (151 to 158) interacts with ADP; it reads GVSRSSKT.

Belongs to the pyruvate, phosphate/water dikinase regulatory protein family. PDRP subfamily.

The enzyme catalyses N(tele)-phospho-L-histidyl/L-threonyl-[pyruvate, phosphate dikinase] + ADP = N(tele)-phospho-L-histidyl/O-phospho-L-threonyl-[pyruvate, phosphate dikinase] + AMP + H(+). It catalyses the reaction N(tele)-phospho-L-histidyl/O-phospho-L-threonyl-[pyruvate, phosphate dikinase] + phosphate + H(+) = N(tele)-phospho-L-histidyl/L-threonyl-[pyruvate, phosphate dikinase] + diphosphate. Functionally, bifunctional serine/threonine kinase and phosphorylase involved in the regulation of the pyruvate, phosphate dikinase (PPDK) by catalyzing its phosphorylation/dephosphorylation. The chain is Putative pyruvate, phosphate dikinase regulatory protein from Geobacter sulfurreducens (strain ATCC 51573 / DSM 12127 / PCA).